The primary structure comprises 345 residues: uncharacterized protein (345 aa).

A run of 8 helical transmembrane segments spans residues 9 to 31 (VVAF…AAFV), 84 to 103 (TLVA…TYLL), 116 to 138 (YFSL…ILYT), 148 to 170 (VPMQ…SGIF), 182 to 204 (VVFV…TIHA), 269 to 286 (WFFW…GVLG), 291 to 308 (ISHY…IAGY), and 313 to 335 (HGLT…VFFI).

Its subcellular location is the cell membrane. This is an uncharacterized protein from Treponema pallidum (strain Nichols).